The following is a 768-amino-acid chain: 5-methyltetrahydropteroyltriglutamate--homocysteine methyltransferase (768 aa).

Residues 17-20 and lysine 117 contribute to the 5-methyltetrahydropteroyltri-L-glutamate site; that span reads RELK. L-homocysteine-binding positions include 442–444 and glutamate 495; that span reads IGS. L-methionine contacts are provided by residues 442–444 and glutamate 495; that span reads IGS. 5-methyltetrahydropteroyltri-L-glutamate contacts are provided by residues 526 to 527 and tryptophan 572; that span reads RC. Aspartate 610 serves as a coordination point for L-homocysteine. Aspartate 610 is a binding site for L-methionine. Residue glutamate 616 coordinates 5-methyltetrahydropteroyltri-L-glutamate. Zn(2+) contacts are provided by histidine 653, cysteine 655, and glutamate 677. Residue histidine 706 is the Proton donor of the active site. Cysteine 738 provides a ligand contact to Zn(2+).

Belongs to the vitamin-B12 independent methionine synthase family. The cofactor is Zn(2+).

The enzyme catalyses 5-methyltetrahydropteroyltri-L-glutamate + L-homocysteine = tetrahydropteroyltri-L-glutamate + L-methionine. It functions in the pathway amino-acid biosynthesis; L-methionine biosynthesis via de novo pathway; L-methionine from L-homocysteine (MetE route): step 1/1. Catalyzes the transfer of a methyl group from 5-methyltetrahydrofolate to homocysteine resulting in methionine formation. This chain is 5-methyltetrahydropteroyltriglutamate--homocysteine methyltransferase, found in Bifidobacterium adolescentis (strain ATCC 15703 / DSM 20083 / NCTC 11814 / E194a).